The sequence spans 251 residues: NADPH-dependent oxidoreductase (251 aa).

The protein belongs to the flavin oxidoreductase frp family. FMN is required as a cofactor.

Functionally, reduces FMN, organic nitro compounds and disulfide DTNB. Involved in maintenance of the cellular redox state and the disulfide stress response. This Staphylococcus aureus (strain USA300) protein is NADPH-dependent oxidoreductase (nfrA).